We begin with the raw amino-acid sequence, 551 residues long: Frizzled-2 (551 aa).

Positions 1-26 are cleaved as a signal peptide; sequence MQGVTRASILLIIYHLFTLSLGQLHG. Residues 27–231 lie on the Extracellular side of the membrane; it reads EKGISVPEHG…FSQDEIRFAR (205 aa). The region spanning 33–152 is the FZ domain; the sequence is PEHGFCQPIS…HGAEQICVGQ (120 aa). 5 disulfide bridges follow: Cys-38/Cys-99, Cys-46/Cys-92, Cys-83/Cys-120, Cys-109/Cys-149, and Cys-113/Cys-137. N-linked (GlcNAc...) asparagine glycosylation occurs at Asn-52. A glycan (N-linked (GlcNAc...) asparagine) is linked at Asn-153. A helical transmembrane segment spans residues 232-252; it reads IWILIWSVLCCASTFITVTTY. The Cytoplasmic portion of the chain corresponds to 253–265; that stretch reads LVDMQRFRYPERP. The chain crosses the membrane as a helical span at residues 266–286; sequence IIFLSGCYTMVSVAYIAGFVL. The Extracellular portion of the chain corresponds to 287–313; the sequence is GDKVVCNEGFSEDGYKTVVQGTKKEGC. The chain crosses the membrane as a helical span at residues 314 to 334; sequence TILFMMLYFFSMASSIWWVIL. The Cytoplasmic segment spans residues 335–356; that stretch reads SLTWFLAAGMKWGHEAIEANSQ. A helical membrane pass occupies residues 357 to 377; the sequence is YFHLAAWAVPAVKTITILAMG. At 378-400 the chain is on the extracellular side; sequence QIDGDLLSGVCFVGLNNIDPLRG. Residues 401 to 421 form a helical membrane-spanning segment; sequence FVLAPLFVYLFIGTSFLLAGF. The Cytoplasmic segment spans residues 422–447; it reads VSLFRIRTIMKHDGTKTEKLERLMVR. A helical transmembrane segment spans residues 448-468; the sequence is IGVFSVLYTVPATIVIACYFY. The Extracellular portion of the chain corresponds to 469 to 505; that stretch reads EQAFREHWERSWVSQNCKSLAIPCPLQYTPRMTPDFT. The chain crosses the membrane as a helical span at residues 506-526; sequence VYMIKYLMTLIVGITSGFWIW. At 527-534 the chain is on the cytoplasmic side; sequence SGKTLHSW. Positions 529 to 534 match the Lys-Thr-X-X-X-Trp motif, mediates interaction with the PDZ domain of Dvl family members motif; it reads KTLHSW. Positions 549–551 match the PDZ-binding motif; it reads TTV.

This sequence belongs to the G-protein coupled receptor Fz/Smo family. In terms of tissue distribution, widely expressed, especially in the eye anlage, otic vesicle and developing somites.

The protein resides in the membrane. The protein localises to the cell membrane. Its function is as follows. Receptor for Wnt proteins. Most of frizzled receptors are coupled to the beta-catenin canonical signaling pathway, which leads to the activation of disheveled proteins, inhibition of GSK-3 kinase, nuclear accumulation of beta-catenin and activation of Wnt target genes. A second signaling pathway involving PKC and calcium fluxes has been seen for some family members, but it is not yet clear if it represents a distinct pathway or if it can be integrated in the canonical pathway, as PKC seems to be required for Wnt-mediated inactivation of GSK-3 kinase. Both pathways seem to involve interactions with G-proteins. May be involved in transduction and intercellular transmission of polarity information during tissue morphogenesis and/or in differentiated tissues. This is Frizzled-2 (fzd2) from Xenopus laevis (African clawed frog).